The following is a 348-amino-acid chain: Galactose-1-phosphate uridylyltransferase (348 aa).

28-31 (RAKR) contacts UDP-alpha-D-glucose. Positions 52 and 55 each coordinate Zn(2+). UDP-alpha-D-glucose-binding positions include V61 and 77 to 78 (ND). Position 115 (H115) interacts with Zn(2+). Residues N153 and 159 to 161 (GCS) each bind UDP-alpha-D-glucose. Position 164 (H164) interacts with Zn(2+). The active-site Tele-UMP-histidine intermediate is H166. Residue Q168 coordinates UDP-alpha-D-glucose. 4 residues coordinate Fe cation: E182, H281, H296, and H298. UDP-alpha-D-glucose contacts are provided by residues 311–312 (KF), 316–317 (YE), and Q323.

Belongs to the galactose-1-phosphate uridylyltransferase type 1 family. Zn(2+) serves as cofactor.

The catalysed reaction is alpha-D-galactose 1-phosphate + UDP-alpha-D-glucose = alpha-D-glucose 1-phosphate + UDP-alpha-D-galactose. The protein operates within carbohydrate metabolism; galactose metabolism. The protein is Galactose-1-phosphate uridylyltransferase (galT) of Salmonella typhimurium (strain LT2 / SGSC1412 / ATCC 700720).